The following is a 507-amino-acid chain: Tabersonine/lochnericine 19-hydroxylase (507 aa).

The helical transmembrane segment at 8-28 (FFVLLLPFFIGIAFIYKLWNF) threads the bilayer. N-linked (GlcNAc...) asparagine glycosylation occurs at Asn167. Cys447 lines the heme pocket.

It belongs to the cytochrome P450 family. Heme is required as a cofactor. Confined to roots.

It is found in the endoplasmic reticulum membrane. It catalyses the reaction (-)-tabersonine + reduced [NADPH--hemoprotein reductase] + O2 = (-)-(R)-19-hydroxytabersonine + oxidized [NADPH--hemoprotein reductase] + H2O + H(+). It carries out the reaction lochnericine + reduced [NADPH--hemoprotein reductase] + O2 = horhammericine + oxidized [NADPH--hemoprotein reductase] + H2O + H(+). The enzyme catalyses (-)-vincadifformine + reduced [NADPH--hemoprotein reductase] + O2 = (-)-minovincinine + oxidized [NADPH--hemoprotein reductase] + H2O + H(+). It functions in the pathway alkaloid biosynthesis. Functionally, component of the monoterpenoid indole alkaloids (MIAs, e.g. echitovenine, tabersonine, lochnericine, 19-hydroxytabersonine and horhammericine) biosynthetic pathway; MIAs are used in cancer treatment and other medical applications. Cytochrome P450 catalyzing the conversion of (-)-tabersonine to 19-hydroxytabersonine, of lochnericine to horhammericine and of (-)-vincadifformine to (-)-minovincinine. The protein is Tabersonine/lochnericine 19-hydroxylase of Catharanthus roseus (Madagascar periwinkle).